A 471-amino-acid chain; its full sequence is Putative multidrug resistance protein MdtD (471 aa).

At 1–11 the chain is on the periplasmic side; that stretch reads MTDLPDSTRWQ. Residues 12–32 traverse the membrane as a helical segment; that stretch reads LWIVAFGFFMQSLDTTIVNTA. The Cytoplasmic segment spans residues 33-48; it reads LPSMAQSLGESPLHMH. A helical transmembrane segment spans residues 49–69; the sequence is MVIVSYVLTVAVMLPASGWLA. The Periplasmic portion of the chain corresponds to 70–76; the sequence is DKVGVRN. Residues 77 to 97 form a helical membrane-spanning segment; the sequence is IFFTAIVLFTLGSLFCALSGT. Residues 98–101 lie on the Cytoplasmic side of the membrane; sequence LNEL. The chain crosses the membrane as a helical span at residues 102–124; it reads LLARALQGVGGAMMVPVGRLTVM. Over 125–137 the chain is Periplasmic; the sequence is KIVPREQYMAAMT. A helical transmembrane segment spans residues 138–158; the sequence is FVTLPGQVGPLLGPALGGLLV. Residues 159–164 are Cytoplasmic-facing; it reads EYASWH. The helical transmembrane segment at 165–185 threads the bilayer; sequence WIFLINIPVGIIGAIATLMLM. Topologically, residues 186 to 196 are periplasmic; it reads PNYTMQTRRFD. A helical membrane pass occupies residues 197–217; that stretch reads LSGFLLLAVGMAVLTLALDGS. At 218-224 the chain is on the cytoplasmic side; the sequence is KGTGLSP. Residues 225 to 245 traverse the membrane as a helical segment; that stretch reads LAITGLVAVGVVALVLYLLHA. Over 246 to 262 the chain is Periplasmic; it reads RNNHRALFSLKLFRTRT. The chain crosses the membrane as a helical span at residues 263–283; that stretch reads FSLGLAGSFAGRIGSGMLPFM. Residues 284 to 285 lie on the Cytoplasmic side of the membrane; it reads TP. Residues 286-306 form a helical membrane-spanning segment; that stretch reads VFLQIGLGFSPFHAGLMMIPM. Residues 307–341 are Periplasmic-facing; it reads VLGSMGMKRIVVQVVNRFGYRRVLVATTLGLSLVT. Residues 342–362 form a helical membrane-spanning segment; that stretch reads LLFMTTALLGWYYVLPFVLFL. Topologically, residues 363–395 are cytoplasmic; that stretch reads QGMVNSTRFSSMNTLTLKDLPDNLASSGNSLLS. The chain crosses the membrane as a helical span at residues 396-416; sequence MIMQLSMSIGVTIAGLLLGLF. Residues 417–430 are Periplasmic-facing; it reads GSQHVSVDSGTTQT. The chain crosses the membrane as a helical span at residues 431–451; that stretch reads VFMYTWLSMAFIIALPAFIFA. Over 452-471 the chain is Cytoplasmic; it reads RVPNDTHQNVAISRRKRSAQ.

This sequence belongs to the major facilitator superfamily. TCR/Tet family.

It is found in the cell inner membrane. The chain is Putative multidrug resistance protein MdtD from Escherichia coli O127:H6 (strain E2348/69 / EPEC).